We begin with the raw amino-acid sequence, 404 residues long: Protein ARK2N (404 aa).

2 stretches are compositionally biased toward basic and acidic residues: residues 1–12 (MKMEEAVGKVEE) and 23–32 (SEQETAKEED). Disordered regions lie at residues 1-50 (MKME…ADST) and 63-255 (RRDS…TNSD). Residue serine 66 is modified to Phosphoserine. Position 67 is a phosphoserine; by AMPK (serine 67). The span at 87–121 (SDSSNHCMLSPSSSGHLADSDTLSSAEENEPSQAE) shows a compositional bias: polar residues. Phosphoserine occurs at positions 143, 145, and 147. Residues 169–187 (AKVKGHRSQKHKERIRLLR) show a composition bias toward basic residues. Residues 175–200 (RSQKHKERIRLLRQKREAAARKKYNL) are a coiled coil. The tract at residues 202–226 (QDSSTSDSDLTCDSSTSSSDDDEEV) is required for interaction with CSNK2B. Low complexity predominate over residues 203–219 (DSSTSDSDLTCDSSTSS). A phosphoserine mark is found at serine 327, serine 328, and serine 330. An Omega-N-methylarginine modification is found at arginine 347. Lysine 358 is covalently cross-linked (Glycyl lysine isopeptide (Lys-Gly) (interchain with G-Cter in SUMO2)).

As to quaternary structure, interacts with CSNK2B (via KSSR). Interacts with JUN; the interaction is mediated by CSNK2B. Phosphorylated at Ser-67 by AMPK. In skeletal muscle, phosphorylation is induced by exercise and seems to increase muscle contractile function. Expressed in skeletal muscle.

The protein resides in the nucleus. Functionally, AMPK substrate important for exercise capacity and skeletal muscle function. Required for normal contraction-induced signaling. In terms of biological role, (Microbial infection) Upon Epstein-Barr virus (EBV) infection, suppresses viral BZLF1 expression and subsequent EBV reactivation by interacting with JUN and inhibiting its transcriptional activator activity on BZLF1 Z promoter. This Homo sapiens (Human) protein is Protein ARK2N.